Reading from the N-terminus, the 317-residue chain is UV DNA damage endonuclease (317 aa).

Belongs to the uve1/UvsE family.

Component in a DNA repair pathway. Removal of UV LIGHT damaged nucleotides. Recognizes pyrimidine dimers and cleave a phosphodiester bond immediately 5' to the lesion. The protein is UV DNA damage endonuclease of Bacillus thuringiensis subsp. konkukian (strain 97-27).